Here is a 189-residue protein sequence, read N- to C-terminus: Parkinson disease protein 7 homolog (189 aa).

Ala2 is subject to N-acetylalanine. 2 S-palmitoyl cysteine lipidation sites follow: Cys46 and Cys53. Phosphotyrosine is present on Tyr67. Cys106 serves as the catalytic Nucleophile. Residue Cys106 is modified to Cysteine sulfinic acid (-SO2H); alternate. A lipid anchor (S-palmitoyl cysteine; alternate) is attached at Cys106. Residue His126 is part of the active site. Lys130 is covalently cross-linked (Glycyl lysine isopeptide (Lys-Gly) (interchain with G-Cter in SUMO)). Lys148 carries the post-translational modification N6-acetyllysine. Lys182 carries the post-translational modification N6-succinyllysine.

It belongs to the peptidase C56 family. As to quaternary structure, homodimer. Binds EFCAB6/DJBP and PIAS2. Part of a ternary complex containing PARK7, EFCAB6/DJBP and AR. Binds to HIPK1. Interacts (via N-terminus) with OTUD7B. Interacts with BBS1, CLCF1 and MTERF. Interacts (via C-terminus) with NCF1; the interaction is enhanced by LPS and modulates NCF1 phosphorylation and membrane translocation. Interacts with NENF. Deglycase activity does not require glutathione as a cofactor, however, glycated glutathione constitutes a PARK7 substrate. is required as a cofactor. Post-translationally, sumoylated on Lys-130 by PIAS2 or PIAS4; which is essential for cell-growth promoting activity and transforming activity. In terms of processing, undergoes cleavage of a C-terminal peptide and subsequent activation of protease activity in response to oxidative stress. Expressed in erythroblasts and in mature red blood cells from peripheral blood (at protein level). In pancreas, expression is higher in islets than surrounding exocrine tissues.

Its subcellular location is the cell membrane. It localises to the cytoplasm. It is found in the membrane raft. The protein resides in the nucleus. The protein localises to the mitochondrion. Its subcellular location is the endoplasmic reticulum. It catalyses the reaction N(omega)-(1-hydroxy-2-oxopropyl)-L-arginyl-[protein] + H2O = lactate + L-arginyl-[protein] + H(+). It carries out the reaction N(6)-(1-hydroxy-2-oxopropyl)-L-lysyl-[protein] + H2O = lactate + L-lysyl-[protein] + H(+). The catalysed reaction is S-(1-hydroxy-2-oxopropyl)-L-cysteinyl-[protein] + H2O = lactate + L-cysteinyl-[protein] + H(+). The enzyme catalyses N(omega)-(1-hydroxy-2-oxoethyl)-L-arginyl-[protein] + H2O = L-arginyl-[protein] + glycolate + H(+). It catalyses the reaction N(6)-(1-hydroxy-2-oxoethyl)-L-lysyl-[protein] + H2O = glycolate + L-lysyl-[protein] + H(+). It carries out the reaction S-(1-hydroxy-2-oxoethyl)-L-cysteinyl-[protein] + H2O = glycolate + L-cysteinyl-[protein] + H(+). The catalysed reaction is N(2)-(1-hydroxy-2-oxopropyl)-dGTP + H2O = lactate + dGTP + H(+). The enzyme catalyses N(2)-(1-hydroxy-2-oxopropyl)-GTP + H2O = lactate + GTP + H(+). It catalyses the reaction N(2)-(1-hydroxy-2-oxopropyl)-GDP + H2O = lactate + GDP + H(+). It carries out the reaction N(2)-(1-hydroxy-2-oxopropyl)-GMP + H2O = lactate + GMP + H(+). The catalysed reaction is N(2)-(1-hydroxy-2-oxoethyl)-dGTP + H2O = dGTP + glycolate + H(+). The enzyme catalyses N(2)-(1-hydroxy-2-oxoethyl)-GTP + H2O = glycolate + GTP + H(+). It catalyses the reaction N(2)-(1-hydroxy-2-oxoethyl)-GDP + H2O = glycolate + GDP + H(+). It carries out the reaction N(2)-(1-hydroxy-2-oxoethyl)-GMP + H2O = glycolate + GMP + H(+). The catalysed reaction is an N(2)-(1-hydroxy-2-oxopropyl)-guanosine in RNA + H2O = a guanosine in RNA + lactate + H(+). The enzyme catalyses an N(2)-(1-hydroxy-2-oxopropyl)-2'-deoxyguanosine in DNA + H2O = a 2'-deoxyguanosine in DNA + lactate + H(+). It catalyses the reaction an N(2)-(1-hydroxy-2-oxoethyl)-guanosine in RNA + H2O = a guanosine in RNA + glycolate + H(+). It carries out the reaction an N(2)-(1-hydroxy-2-oxoethyl)-2'-deoxyguanosine in DNA + H2O = a 2'-deoxyguanosine in DNA + glycolate + H(+). In terms of biological role, multifunctional protein with controversial molecular function which plays an important role in cell protection against oxidative stress and cell death acting as oxidative stress sensor and redox-sensitive chaperone and protease. It is involved in neuroprotective mechanisms like the stabilization of NFE2L2 and PINK1 proteins, male fertility as a positive regulator of androgen signaling pathway as well as cell growth and transformation through, for instance, the modulation of NF-kappa-B signaling pathway. Has been described as a protein and nucleotide deglycase that catalyzes the deglycation of the Maillard adducts formed between amino groups of proteins or nucleotides and reactive carbonyl groups of glyoxals. But this function is rebuted by other works. As a protein deglycase, repairs methylglyoxal- and glyoxal-glycated proteins, and releases repaired proteins and lactate or glycolate, respectively. Deglycates cysteine, arginine and lysine residues in proteins, and thus reactivates these proteins by reversing glycation by glyoxals. Acts on early glycation intermediates (hemithioacetals and aminocarbinols), preventing the formation of advanced glycation endproducts (AGE) that cause irreversible damage. Also functions as a nucleotide deglycase able to repair glycated guanine in the free nucleotide pool (GTP, GDP, GMP, dGTP) and in DNA and RNA. Is thus involved in a major nucleotide repair system named guanine glycation repair (GG repair), dedicated to reversing methylglyoxal and glyoxal damage via nucleotide sanitization and direct nucleic acid repair. Protects histones from adduction by methylglyoxal, controls the levels of methylglyoxal-derived argininine modifications on chromatin. Able to remove the glycations and restore histone 3, histone glycation disrupts both local and global chromatin architecture by altering histone-DNA interactions as well as histone acetylation and ubiquitination levels. Displays a very low glyoxalase activity that may reflect its deglycase activity. Eliminates hydrogen peroxide and protects cells against hydrogen peroxide-induced cell death. Required for correct mitochondrial morphology and function as well as for autophagy of dysfunctional mitochondria. Plays a role in regulating expression or stability of the mitochondrial uncoupling proteins SLC25A14 and SLC25A27 in dopaminergic neurons of the substantia nigra pars compacta and attenuates the oxidative stress induced by calcium entry into the neurons via L-type channels during pacemaking. Regulates astrocyte inflammatory responses, may modulate lipid rafts-dependent endocytosis in astrocytes and neuronal cells. In pancreatic islets, involved in the maintenance of mitochondrial reactive oxygen species (ROS) levels and glucose homeostasis in an age- and diet dependent manner. Protects pancreatic beta cells from cell death induced by inflammatory and cytotoxic setting. Binds to a number of mRNAs containing multiple copies of GG or CC motifs and partially inhibits their translation but dissociates following oxidative stress. Metal-binding protein able to bind copper as well as toxic mercury ions, enhances the cell protection mechanism against induced metal toxicity. In macrophages, interacts with the NADPH oxidase subunit NCF1 to direct NADPH oxidase-dependent ROS production, and protects against sepsis. This is Parkinson disease protein 7 homolog from Mus musculus (Mouse).